Consider the following 194-residue polypeptide: Ion-translocating oxidoreductase complex subunit A (194 aa).

A run of 6 helical transmembrane segments spans residues 4-24 (LALI…QFLG), 39-59 (IGLS…SHIL), 72-92 (LRTI…EMLV), 102-122 (VLGI…VALL), 135-155 (TTQG…FAAL), and 172-192 (AIGM…SGLV).

Belongs to the NqrDE/RnfAE family. As to quaternary structure, the complex is composed of six subunits: RnfA, RnfB, RnfC, RnfD, RnfE and RnfG.

It localises to the cell inner membrane. Part of a membrane-bound complex that couples electron transfer with translocation of ions across the membrane. The protein is Ion-translocating oxidoreductase complex subunit A of Pseudomonas aeruginosa (strain LESB58).